Consider the following 147-residue polypeptide: Receptor activity-modifying protein 3 (147 aa).

A signal peptide spans methionine 1–alanine 22. Topologically, residues glutamine 23 to aspartate 112 are extracellular. Asparagine 28, asparagine 57, asparagine 70, and asparagine 102 each carry an N-linked (GlcNAc...) asparagine glycan. 2 cysteine pairs are disulfide-bonded: cysteine 39–cysteine 71 and cysteine 56–cysteine 103. Residues proline 113–valine 137 traverse the membrane as a helical segment. The Cytoplasmic segment spans residues tryptophan 138–leucine 147.

This sequence belongs to the RAMP family. Heterodimer of CALCRL and RAMP3; interaction induces allosteric modulation of CALCRL function and ligand specificity for adrenomedullin/ADM and intermedin/ADM2. Heterodimer of CALCR and RAMP3; interaction form the receptor complex AMYR3 for amylin/IAPP. Interacts with GPER1. Expressed predominantly in the testis, embryonic and adult brain and in kidney.

It localises to the cell membrane. Its subcellular location is the membrane. Its function is as follows. Accessory protein that interacts with and modulates the function of G-protein coupled receptors including calcitonin gene-related peptide type 1 receptor (CALCRL), calcitonin receptor (CALCR) and G-protein coupled estrogen receptor 1 (GPER1). Required for the transport of CALCRL and GPER1 receptors to the plasma membrane. Plays a role in cardioprotection by reducing cardiac hypertrophy and perivascular fibrosis in a GPER1-dependent manner. Together with CALCRL, form a receptor complex for adrenomedullin/ADM and intermedin/ADM2. Together with CALCR, act as a receptor complex for amylin/IAPP. The polypeptide is Receptor activity-modifying protein 3 (Mus musculus (Mouse)).